A 429-amino-acid chain; its full sequence is 3-phosphoshikimate 1-carboxyvinyltransferase (429 aa).

Positions 23, 24, and 28 each coordinate 3-phosphoshikimate. K23 provides a ligand contact to phosphoenolpyruvate. Phosphoenolpyruvate contacts are provided by G97 and R125. 3-phosphoshikimate is bound by residues S170, S171, Q172, S198, D314, N338, and K342. Q172 contributes to the phosphoenolpyruvate binding site. Catalysis depends on D314, which acts as the Proton acceptor. Positions 346, 388, and 413 each coordinate phosphoenolpyruvate.

The protein belongs to the EPSP synthase family. As to quaternary structure, monomer.

Its subcellular location is the cytoplasm. It catalyses the reaction 3-phosphoshikimate + phosphoenolpyruvate = 5-O-(1-carboxyvinyl)-3-phosphoshikimate + phosphate. The protein operates within metabolic intermediate biosynthesis; chorismate biosynthesis; chorismate from D-erythrose 4-phosphate and phosphoenolpyruvate: step 6/7. In terms of biological role, catalyzes the transfer of the enolpyruvyl moiety of phosphoenolpyruvate (PEP) to the 5-hydroxyl of shikimate-3-phosphate (S3P) to produce enolpyruvyl shikimate-3-phosphate and inorganic phosphate. The polypeptide is 3-phosphoshikimate 1-carboxyvinyltransferase (Pectobacterium atrosepticum (strain SCRI 1043 / ATCC BAA-672) (Erwinia carotovora subsp. atroseptica)).